The sequence spans 394 residues: Deoxyguanosinetriphosphate triphosphohydrolase-like protein (394 aa).

Residues Met-1–Thr-34 are disordered. Residues Asp-16 to Thr-34 are compositionally biased toward basic and acidic residues. An HD domain is found at Arg-70–Asn-210.

Belongs to the dGTPase family. Type 2 subfamily.

The chain is Deoxyguanosinetriphosphate triphosphohydrolase-like protein from Caulobacter sp. (strain K31).